Consider the following 320-residue polypeptide: Glycerol-3-phosphate dehydrogenase [NAD(P)+] (320 aa).

Ser-14, Phe-15, Arg-35, and Lys-109 together coordinate NADPH. The sn-glycerol 3-phosphate site is built by Lys-109 and Gly-137. Ala-141 contributes to the NADPH binding site. Residues Lys-192, Asp-248, Ser-258, Arg-259, and Asn-260 each coordinate sn-glycerol 3-phosphate. The Proton acceptor role is filled by Lys-192. NADPH is bound at residue Arg-259. The NADPH site is built by Leu-283 and Glu-285.

It belongs to the NAD-dependent glycerol-3-phosphate dehydrogenase family.

The protein localises to the cytoplasm. The enzyme catalyses sn-glycerol 3-phosphate + NAD(+) = dihydroxyacetone phosphate + NADH + H(+). It carries out the reaction sn-glycerol 3-phosphate + NADP(+) = dihydroxyacetone phosphate + NADPH + H(+). The protein operates within membrane lipid metabolism; glycerophospholipid metabolism. In terms of biological role, catalyzes the reduction of the glycolytic intermediate dihydroxyacetone phosphate (DHAP) to sn-glycerol 3-phosphate (G3P), the key precursor for phospholipid synthesis. This chain is Glycerol-3-phosphate dehydrogenase [NAD(P)+], found in Rickettsia typhi (strain ATCC VR-144 / Wilmington).